The sequence spans 189 residues: Hypoxanthine/guanine phosphoribosyltransferase (189 aa).

Belongs to the purine/pyrimidine phosphoribosyltransferase family. Archaeal HPRT subfamily. In terms of assembly, homodimer.

The protein resides in the cytoplasm. It carries out the reaction IMP + diphosphate = hypoxanthine + 5-phospho-alpha-D-ribose 1-diphosphate. The catalysed reaction is GMP + diphosphate = guanine + 5-phospho-alpha-D-ribose 1-diphosphate. The protein operates within purine metabolism; IMP biosynthesis via salvage pathway; IMP from hypoxanthine: step 1/1. Catalyzes a salvage reaction resulting in the formation of IMP that is energically less costly than de novo synthesis. This Methanothermus fervidus (strain ATCC 43054 / DSM 2088 / JCM 10308 / V24 S) protein is Hypoxanthine/guanine phosphoribosyltransferase.